We begin with the raw amino-acid sequence, 228 residues long: MSTWANLGLQDSASPLMEQLIFFHDHALLILVMITVLVGYLMFMLFFNNYVNRFLLHGQLIEMIWTILPAIILLFIALPSLRLLYLLDEINEPSVTLKSIGHQWYWSYEYSDFNNIEFDSYMIPTNELMTDGFRLLDVDNRVVLPMNSQIRILVTAADVIHSWTVPALGVKVDGTPGRLNQTNFFINRPGLFYGQCSEICGANHSFMPIVIESVPVNYFIKWISSNNS.

Topologically, residues 1–26 (MSTWANLGLQDSASPLMEQLIFFHDH) are mitochondrial intermembrane. Residues 27–48 (ALLILVMITVLVGYLMFMLFFN) traverse the membrane as a helical segment. Residues 49-62 (NYVNRFLLHGQLIE) lie on the Mitochondrial matrix side of the membrane. A helical transmembrane segment spans residues 63-82 (MIWTILPAIILLFIALPSLR). Residues 83–228 (LLYLLDEINE…FIKWISSNNS (146 aa)) are Mitochondrial intermembrane-facing. The Cu cation site is built by His-161, Cys-196, Glu-198, Cys-200, His-204, and Met-207. Residue Glu-198 participates in Mg(2+) binding.

It belongs to the cytochrome c oxidase subunit 2 family. As to quaternary structure, component of the cytochrome c oxidase (complex IV, CIV), a multisubunit enzyme composed of a catalytic core of 3 subunits and several supernumerary subunits. The complex exists as a monomer or a dimer and forms supercomplexes (SCs) in the inner mitochondrial membrane with ubiquinol-cytochrome c oxidoreductase (cytochrome b-c1 complex, complex III, CIII). Cu cation is required as a cofactor.

The protein resides in the mitochondrion inner membrane. It catalyses the reaction 4 Fe(II)-[cytochrome c] + O2 + 8 H(+)(in) = 4 Fe(III)-[cytochrome c] + 2 H2O + 4 H(+)(out). Component of the cytochrome c oxidase, the last enzyme in the mitochondrial electron transport chain which drives oxidative phosphorylation. The respiratory chain contains 3 multisubunit complexes succinate dehydrogenase (complex II, CII), ubiquinol-cytochrome c oxidoreductase (cytochrome b-c1 complex, complex III, CIII) and cytochrome c oxidase (complex IV, CIV), that cooperate to transfer electrons derived from NADH and succinate to molecular oxygen, creating an electrochemical gradient over the inner membrane that drives transmembrane transport and the ATP synthase. Cytochrome c oxidase is the component of the respiratory chain that catalyzes the reduction of oxygen to water. Electrons originating from reduced cytochrome c in the intermembrane space (IMS) are transferred via the dinuclear copper A center (CU(A)) of subunit 2 and heme A of subunit 1 to the active site in subunit 1, a binuclear center (BNC) formed by heme A3 and copper B (CU(B)). The BNC reduces molecular oxygen to 2 water molecules using 4 electrons from cytochrome c in the IMS and 4 protons from the mitochondrial matrix. The chain is Cytochrome c oxidase subunit 2 (mt:CoII) from Drosophila melanogaster (Fruit fly).